The primary structure comprises 398 residues: Acetate kinase (398 aa).

Residue N10 coordinates Mg(2+). K17 is an ATP binding site. R89 provides a ligand contact to substrate. Catalysis depends on D148, which acts as the Proton donor/acceptor. Residues 208–212 (HLGNG), 283–285 (DCR), and 331–335 (GIGEN) each bind ATP. Residue E385 coordinates Mg(2+).

It belongs to the acetokinase family. In terms of assembly, homodimer. The cofactor is Mg(2+). Mn(2+) serves as cofactor.

It localises to the cytoplasm. It catalyses the reaction acetate + ATP = acetyl phosphate + ADP. The protein operates within metabolic intermediate biosynthesis; acetyl-CoA biosynthesis; acetyl-CoA from acetate: step 1/2. Functionally, catalyzes the formation of acetyl phosphate from acetate and ATP. Can also catalyze the reverse reaction. This Histophilus somni (strain 129Pt) (Haemophilus somnus) protein is Acetate kinase.